We begin with the raw amino-acid sequence, 337 residues long: Anthranilate phosphoribosyltransferase (337 aa).

5-phospho-alpha-D-ribose 1-diphosphate-binding positions include Gly-81, 84-85, Ser-89, 91-94, 109-117, and Ala-121; these read GD, NVST, and KHGNRAMSS. Gly-81 serves as a coordination point for anthranilate. Residue Ser-93 coordinates Mg(2+). Anthranilate is bound at residue Asn-112. An anthranilate-binding site is contributed by Arg-167. Mg(2+) is bound by residues Asp-226 and Glu-227.

It belongs to the anthranilate phosphoribosyltransferase family. As to quaternary structure, homodimer. It depends on Mg(2+) as a cofactor.

It carries out the reaction N-(5-phospho-beta-D-ribosyl)anthranilate + diphosphate = 5-phospho-alpha-D-ribose 1-diphosphate + anthranilate. The protein operates within amino-acid biosynthesis; L-tryptophan biosynthesis; L-tryptophan from chorismate: step 2/5. Its function is as follows. Catalyzes the transfer of the phosphoribosyl group of 5-phosphorylribose-1-pyrophosphate (PRPP) to anthranilate to yield N-(5'-phosphoribosyl)-anthranilate (PRA). This Afipia carboxidovorans (strain ATCC 49405 / DSM 1227 / KCTC 32145 / OM5) (Oligotropha carboxidovorans) protein is Anthranilate phosphoribosyltransferase.